We begin with the raw amino-acid sequence, 527 residues long: Berberine bridge enzyme-like 8 (527 aa).

The first 20 residues, 1-20 (MKYALILVLFFVVFIWQSSS), serve as a signal peptide directing secretion. A disulfide bridge connects residues cysteine 31 and cysteine 93. 2 N-linked (GlcNAc...) asparagine glycosylation sites follow: asparagine 51 and asparagine 68. Residues 71-247 (STPKPFLIIA…LAYKINLVEV (177 aa)) enclose the FAD-binding PCMH-type domain. The segment at residues 108-172 (HDYDGLSYVT…KTLAYPAGIC (65 aa)) is a cross-link (6-(S-cysteinyl)-8alpha-(pros-histidyl)-FAD (His-Cys)). Asparagine 250, asparagine 263, and asparagine 292 each carry an N-linked (GlcNAc...) asparagine glycan.

The protein belongs to the oxygen-dependent FAD-linked oxidoreductase family. FAD is required as a cofactor. The FAD cofactor is bound via a bicovalent 6-S-cysteinyl, 8alpha-N1-histidyl FAD linkage.

The protein resides in the secreted. Its subcellular location is the cell wall. This chain is Berberine bridge enzyme-like 8, found in Arabidopsis thaliana (Mouse-ear cress).